The chain runs to 135 residues: Galectin-1 (135 aa).

Ala2 carries the N-acetylalanine modification. Residues 4 to 135 (GLVASNLNLK…DFKIKCVAFD (132 aa)) form the Galectin domain. N6-acetyllysine is present on residues Lys13 and Lys29. The residue at position 30 (Ser30) is a Phosphoserine; by FAM20C. A beta-D-galactoside-binding positions include 45–49 (HFNPR), His53, Asn62, and 69–72 (WGTE). Residue Lys108 is modified to N6-acetyllysine; alternate. Residue Lys108 is modified to N6-succinyllysine; alternate. An N6-acetyllysine modification is found at Lys128.

As to quaternary structure, homodimer. Binds LGALS3BP. Interacts with CD2, CD3, CD4, CD6, CD7, CD43, ALCAM and CD45. Interacts with laminin (via poly-N-acetyllactosamine). Interacts with SUSD2. Interacts with cargo receptor TMED10; the interaction mediates the translocation from the cytoplasm into the ERGIC (endoplasmic reticulum-Golgi intermediate compartment) and thereby secretion. Interacts with CD69. As to expression, expressed in placenta, maternal decidua and fetal membranes. Within placenta, expressed in trophoblasts, stromal cells, villous endothelium, syncytiotrophoblast apical membrane and villous stroma. Within fetal membranes, expressed in amnion, chorioamniotic mesenchyma and chorion (at protein level). Expressed in cardiac, smooth, and skeletal muscle, neurons, thymus, kidney and hematopoietic cells.

The protein localises to the secreted. It localises to the extracellular space. Its subcellular location is the extracellular matrix. It is found in the cytoplasm. Functionally, lectin that binds beta-galactoside and a wide array of complex carbohydrates. Plays a role in regulating apoptosis, cell proliferation and cell differentiation. Inhibits CD45 protein phosphatase activity and therefore the dephosphorylation of Lyn kinase. Strong inducer of T-cell apoptosis. Plays a negative role in Th17 cell differentiation via activation of the receptor CD69. The polypeptide is Galectin-1 (Homo sapiens (Human)).